The primary structure comprises 310 residues: D-alanine--D-alanine ligase (310 aa).

The ATP-grasp domain occupies 107 to 302 (KQAFQAARLT…FEDLVERILA (196 aa)). Residue 135 to 188 (EFSLPVVVKPSQEGSSVGVSIVKKESEFAAAMKEAFRYDREILVEQFIKGSEVQ) participates in ATP binding. Residues D256, E269, and N271 each coordinate Mg(2+).

Belongs to the D-alanine--D-alanine ligase family. Mg(2+) is required as a cofactor. Requires Mn(2+) as cofactor.

The protein resides in the cytoplasm. It carries out the reaction 2 D-alanine + ATP = D-alanyl-D-alanine + ADP + phosphate + H(+). The protein operates within cell wall biogenesis; peptidoglycan biosynthesis. Functionally, cell wall formation. The sequence is that of D-alanine--D-alanine ligase from Geotalea uraniireducens (strain Rf4) (Geobacter uraniireducens).